Consider the following 371-residue polypeptide: Geranylgeranyl transferase type-2 subunit alpha (371 aa).

PFTA repeat units follow at residues 45 to 79, 92 to 126, 131 to 165, 177 to 211, and 242 to 276; these read YSDE…NNYS, ILNQ…ELVK, NWKY…NMEL, INLD…KIYN, and LLKN…DDLF.

Belongs to the protein prenyltransferase subunit alpha family. Heterodimer of an alpha and a beta subunit.

The catalysed reaction is geranylgeranyl diphosphate + L-cysteinyl-[protein] = S-geranylgeranyl-L-cysteinyl-[protein] + diphosphate. Its function is as follows. Catalyzes the transfer of a geranyl-geranyl moiety from geranyl-geranyl pyrophosphate to proteins having the C-terminal -XCC or -XCXC, where both cysteines may become modified. Acts on YPT1 and SEC4. This is Geranylgeranyl transferase type-2 subunit alpha (BET4) from Candida albicans (Yeast).